The following is a 539-amino-acid chain: Probable elastin-binding protein EbpS (539 aa).

Positions 1-14 are enriched in basic and acidic residues; sequence MSKNNFRDDFEKNR. The disordered stretch occupies residues 1–324; it reads MSKNNFRDDF…EDGNDGFQAH (324 aa). Positions 21–34 are enriched in acidic residues; sequence DQFEDNTNEFDENS. A compositionally biased stretch (low complexity) spans 35–52; that stretch reads NESNDFDNQSDQQFPPRN. A compositionally biased stretch (basic residues) spans 53–69; that stretch reads AQRRQRRRNQATNKNRK. Residues 70 to 81 are compositionally biased toward polar residues; it reads FGNQNSDSNANG. Basic and acidic residues-rich tracts occupy residues 100-176, 210-226, and 233-259; these read QENH…DQQN, EHHD…RDLN, and QNRK…EPKK. Low complexity predominate over residues 266–283; sequence AAVGAGAAGAAGAAGVAA. Basic and acidic residues predominate over residues 291-317; it reads KNNNHKDNHSHNRDHQDDHRNHKHEDG. Residues 335-355 form a helical membrane-spanning segment; the sequence is ILLPLIALLLILAALAIFIGM. Composition is skewed to basic and acidic residues over residues 362–371 and 378–417; these read KDSNQADNKT and DNNK…KATT. The segment at 362-491 is disordered; sequence KDSNQADNKT…NSSNSGQQTH (130 aa). Residues 418 to 490 are compositionally biased toward low complexity; it reads DNDSSNNSSD…SNSSNSGQQT (73 aa). A LysM domain is found at 489 to 537; sequence QTHVVSGNENLYRIAIQYYGEGTVENVNKLKQANGLSSNNISNGQKLII.

It is found in the cell membrane. The protein is Probable elastin-binding protein EbpS (ebpS) of Staphylococcus haemolyticus (strain JCSC1435).